The chain runs to 127 residues: Aspartate 1-decarboxylase (127 aa).

The active-site Schiff-base intermediate with substrate; via pyruvic acid is serine 25. Serine 25 carries the pyruvic acid (Ser) modification. Threonine 57 lines the substrate pocket. Tyrosine 58 (proton donor) is an active-site residue. 73-75 (GAA) is a substrate binding site.

It belongs to the PanD family. In terms of assembly, heterooctamer of four alpha and four beta subunits. Pyruvate serves as cofactor. In terms of processing, is synthesized initially as an inactive proenzyme, which is activated by self-cleavage at a specific serine bond to produce a beta-subunit with a hydroxyl group at its C-terminus and an alpha-subunit with a pyruvoyl group at its N-terminus.

The protein localises to the cytoplasm. It catalyses the reaction L-aspartate + H(+) = beta-alanine + CO2. It participates in cofactor biosynthesis; (R)-pantothenate biosynthesis; beta-alanine from L-aspartate: step 1/1. Functionally, catalyzes the pyruvoyl-dependent decarboxylation of aspartate to produce beta-alanine. In Staphylococcus aureus (strain JH1), this protein is Aspartate 1-decarboxylase.